The chain runs to 266 residues: Stomatin homolog PH1511 (266 aa).

Residues 7–27 (FFVTSIILLFILIFLASAIKI) traverse the membrane as a helical segment. 2 coiled-coil regions span residues 125 to 152 (GQAH…EATD) and 178 to 213 (RQAE…ISEH).

It belongs to the band 7/mec-2 family. In terms of assembly, homotrimer. Interacts with PH1510 and is cleaved by PH1510.

It localises to the membrane. The chain is Stomatin homolog PH1511 from Pyrococcus horikoshii (strain ATCC 700860 / DSM 12428 / JCM 9974 / NBRC 100139 / OT-3).